A 524-amino-acid polypeptide reads, in one-letter code: Na(+)/H(+) antiporter NhaB (524 aa).

13 helical membrane passes run 23-43 (LAII…SPFV), 45-65 (GWML…CYPL), 98-118 (LLLI…LFIF), 136-156 (CVAS…AVVI), 203-223 (LMMH…VGEP), 239-259 (FFMR…LVCI), 304-324 (ALIG…VGLV), 325-345 (GLSV…HALG), 358-378 (LTVF…TPII), 392-412 (LFYL…VGTV), 420-440 (AFEL…AINT), 448-468 (ATPN…APLI), and 479-499 (ALPY…YLLV).

Belongs to the NhaB Na(+)/H(+) (TC 2.A.34) antiporter family.

The protein localises to the cell inner membrane. It catalyses the reaction 2 Na(+)(in) + 3 H(+)(out) = 2 Na(+)(out) + 3 H(+)(in). Functionally, na(+)/H(+) antiporter that extrudes sodium in exchange for external protons. The protein is Na(+)/H(+) antiporter NhaB of Yersinia enterocolitica serotype O:8 / biotype 1B (strain NCTC 13174 / 8081).